A 133-amino-acid chain; its full sequence is Small ribosomal subunit protein uS8 (133 aa).

Belongs to the universal ribosomal protein uS8 family. Part of the 30S ribosomal subunit. Contacts proteins S5 and S12.

In terms of biological role, one of the primary rRNA binding proteins, it binds directly to 16S rRNA central domain where it helps coordinate assembly of the platform of the 30S subunit. This is Small ribosomal subunit protein uS8 from Koribacter versatilis (strain Ellin345).